Consider the following 143-residue polypeptide: Large ribosomal subunit protein uL13 (143 aa).

Belongs to the universal ribosomal protein uL13 family. Part of the 50S ribosomal subunit.

This protein is one of the early assembly proteins of the 50S ribosomal subunit, although it is not seen to bind rRNA by itself. It is important during the early stages of 50S assembly. The sequence is that of Large ribosomal subunit protein uL13 from Rubrobacter xylanophilus (strain DSM 9941 / JCM 11954 / NBRC 16129 / PRD-1).